Reading from the N-terminus, the 205-residue chain is Recombination protein RecR (205 aa).

Residues 59–74 (CARCNTFCEGGLCDIC) form a C4-type zinc finger. The Toprim domain maps to 82–177 (RRLMVVHMPA…KVSRLSQGIP (96 aa)).

Belongs to the RecR family.

Its function is as follows. May play a role in DNA repair. It seems to be involved in an RecBC-independent recombinational process of DNA repair. It may act with RecF and RecO. The polypeptide is Recombination protein RecR (Neisseria gonorrhoeae (strain ATCC 700825 / FA 1090)).